Here is a 323-residue protein sequence, read N- to C-terminus: Transaldolase (323 aa).

The Schiff-base intermediate with substrate role is filled by lysine 133.

Belongs to the transaldolase family. Type 1 subfamily. In terms of assembly, monomer.

The enzyme catalyses D-sedoheptulose 7-phosphate + D-glyceraldehyde 3-phosphate = D-erythrose 4-phosphate + beta-D-fructose 6-phosphate. It functions in the pathway carbohydrate degradation; pentose phosphate pathway; D-glyceraldehyde 3-phosphate and beta-D-fructose 6-phosphate from D-ribose 5-phosphate and D-xylulose 5-phosphate (non-oxidative stage): step 2/3. In terms of biological role, important for the balance of metabolites in the pentose-phosphate pathway. Involved in xylose fermentation to ethanol. The polypeptide is Transaldolase (Gibberella intermedia (Bulb rot disease fungus)).